The sequence spans 286 residues: Master replication protein (286 aa).

A CRESS-DNA virus Rep endonuclease domain is found at 2 to 96 (ARYVVCWMFT…IEGPFEFGSF (95 aa)). The RCR-1 motif lies at 9-12 (MFTI). Positions 33 and 41 each coordinate a divalent metal cation. Positions 41–43 (HVQ) match the RCR-2 motif. The Nuclear localization signal motif lies at 50–70 (RRSSLKQMRGFFPGAHLEKRK). Tyr79 (for DNA cleavage activity) is an active-site residue. Positions 79-82 (YCMK) match the RCR-3 motif. Asp84 is a binding site for a divalent metal cation. The short motif at 96–102 (FKLSCND) is the Nuclear localization signal element. 180 to 188 (GPNGGEGKT) serves as a coordination point for ATP.

Belongs to the nanoviridea/circoviridae replication-associated protein family. As to quaternary structure, homooligomer (Potential). Rep binds to repeated DNA motifs (iterons). Mg(2+) is required as a cofactor. The cofactor is Mn(2+).

It localises to the host nucleus. It catalyses the reaction ATP + H2O = ADP + phosphate + H(+). Essential for the replication of all genomic viral ssDNA (trans-replication). The closed circular ssDNA genome is first converted to a superhelical dsDNA. Rep binds a specific hairpin at the genome origin of replication. Introduces an endonucleolytic nick within the conserved sequence 5'-A[GT]TATTAC-3' in the intergenic region of the genome, thereby initiating the rolling circle replication (RCR). Following cleavage, binds covalently to the 5'-phosphate of DNA as a tyrosyl ester. The cleavage gives rise to a free 3'-OH that serves as a primer for the cellular DNA polymerase. The polymerase synthesizes the (+) strand DNA by rolling circle mechanism. After one round of replication, a Rep-catalyzed nucleotidyl transfer reaction releases a circular single-stranded virus genome, thereby terminating the replication. Displays origin-specific DNA cleavage, nucleotidyl transferase, ATPase and helicase activities. In Musa (BBTV), this protein is Master replication protein (DNA-R).